The sequence spans 503 residues: Probable cytosol aminopeptidase (503 aa).

Positions 274 and 279 each coordinate Mn(2+). The active site involves lysine 286. Mn(2+) is bound by residues aspartate 297, aspartate 356, and glutamate 358. Arginine 360 is a catalytic residue.

This sequence belongs to the peptidase M17 family. It depends on Mn(2+) as a cofactor.

It is found in the cytoplasm. The catalysed reaction is Release of an N-terminal amino acid, Xaa-|-Yaa-, in which Xaa is preferably Leu, but may be other amino acids including Pro although not Arg or Lys, and Yaa may be Pro. Amino acid amides and methyl esters are also readily hydrolyzed, but rates on arylamides are exceedingly low.. The enzyme catalyses Release of an N-terminal amino acid, preferentially leucine, but not glutamic or aspartic acids.. Functionally, presumably involved in the processing and regular turnover of intracellular proteins. Catalyzes the removal of unsubstituted N-terminal amino acids from various peptides. The polypeptide is Probable cytosol aminopeptidase (Burkholderia pseudomallei (strain 1106a)).